Reading from the N-terminus, the 518-residue chain is MKKLKINYLFIGILALLLAVALWPSIPWFGKADNRIAAIQARGELRVSTIHTPLTYNEINGKPFGLDYELAKQFADYLGVKLKVTVRQNISQLFDDLDNGNADLLAAGLVYNSERVKNYQPGPTYYSVSQQLVYKVGQYRPRTLGNLTAEQLTVAPGHVVVNDLQTLKETKFPELSWKVDDKKGSAELMEDVIEGKLDYTIADSVAISLFQRVHPELAVALDITDEQPVTWFSPLDGDNTLSAALLDFFNEMNEDGTLARIEEKYLGHGDDFDYVDTRTFLRAVDAVLPQLKPLFEKYAEEIDWRLLAAIAYQESHWDAQATSPTGVRGMMMLTKNTAQSLGITDRTDAEQSISGGVRYLQDMMSKVPESVPENERIWFALAAYNMGYAHMQDARALTAKTKGNPDSWADVKQRLPLLSQKPYYSKLTYGYARGHEAYAYVENIRKYQISLVGYLQEKEKQATEAAMQLAQDYPAVSPTELGKEKFPFLSFLSQSSSNYLTHSPSLLFSRKGSEEKQN.

An N-terminal signal peptide occupies residues 1–21 (MKKLKINYLFIGILALLLAVA). The tract at residues 22 to 269 (LWPSIPWFGK…RIEEKYLGHG (248 aa)) is non-LT domain. Positions 270 to 518 (DDFDYVDTRT…SRKGSEEKQN (249 aa)) are LT domain. The active site involves E314.

The protein in the N-terminal section; belongs to the bacterial solute-binding protein 3 family. In the C-terminal section; belongs to the transglycosylase Slt family.

The protein localises to the cell outer membrane. It catalyses the reaction Exolytic cleavage of the (1-&gt;4)-beta-glycosidic linkage between N-acetylmuramic acid (MurNAc) and N-acetylglucosamine (GlcNAc) residues in peptidoglycan, from either the reducing or the non-reducing ends of the peptidoglycan chains, with concomitant formation of a 1,6-anhydrobond in the MurNAc residue.. Murein-degrading enzyme that degrades murein glycan strands and insoluble, high-molecular weight murein sacculi, with the concomitant formation of a 1,6-anhydromuramoyl product. Lytic transglycosylases (LTs) play an integral role in the metabolism of the peptidoglycan (PG) sacculus. Their lytic action creates space within the PG sacculus to allow for its expansion as well as for the insertion of various structures such as secretion systems and flagella. This chain is Membrane-bound lytic murein transglycosylase F, found in Escherichia coli O157:H7.